Reading from the N-terminus, the 215-residue chain is 3,4-dihydroxy-2-butanone 4-phosphate synthase (215 aa).

Residues 38-39 (RE), Asp43, 151-155 (RRGHT), and Glu175 each bind D-ribulose 5-phosphate. Glu39 provides a ligand contact to Mg(2+). Mg(2+) is bound at residue His154.

The protein belongs to the DHBP synthase family. In terms of assembly, homodimer. Requires Mg(2+) as cofactor. Mn(2+) is required as a cofactor.

The catalysed reaction is D-ribulose 5-phosphate = (2S)-2-hydroxy-3-oxobutyl phosphate + formate + H(+). The protein operates within cofactor biosynthesis; riboflavin biosynthesis; 2-hydroxy-3-oxobutyl phosphate from D-ribulose 5-phosphate: step 1/1. Its function is as follows. Catalyzes the conversion of D-ribulose 5-phosphate to formate and 3,4-dihydroxy-2-butanone 4-phosphate. This chain is 3,4-dihydroxy-2-butanone 4-phosphate synthase, found in Haemophilus influenzae (strain ATCC 51907 / DSM 11121 / KW20 / Rd).